The chain runs to 640 residues: MAALVSTVSSIIRWNSNNNNNNNFTRSVKSCLSSNYHNNNNIIHNKTVLMSTNNNNNNNQKNSSRRSANYQPPLWQFDYVQSLSSPFKDEAYVKRVEKLKEEVRVMVKRAREEEKPLSQLELIDVLQRLGISYHFEDEINDILKHIYNNNNVYNTNNNVYANSLEFRLLRQHGYPVSQEIFSTCKDERGNFMVCTNDIKGMLSLYEASFYLVENEDGILEETREKTKKYLEEYIIMIMEKQQSLLDQNNNNYDYDYDYELVSHALELPLHWRMLRLESRWFIDVYEKRLDMNPTLLTLAKLDFNIVQSIYQDDLKHVFSWWESTDMGKKLEFARDRTMVNFLWTVGVAFEPHFKSFRRMITKVNALITVIDDIYDVYGTLDELELFTNAVERWDISAMDGLPEYMKTCFLALYNFINDLPFDVLKGEEGLHIIKFLQKSWADLCKSYLREARWYYNGYTPSFEEYIENAWISISGPVILSHLYFFVVNPNKENALLSTCFDGYPTIIRHSSMILRLKDDMGTSTDELKRGDVPKSIQCKMYEDGISEEEARQRIKLLISETWKLINKDYINLDDDDDGGDDYSPMFYKSNNINKAFIEMCLNLGRMAHCIYQYGDGHGIQDRQTKDHVLSLLIHPIPLTQ.

The transit peptide at 1–95 (MAALVSTVSS…PFKDEAYVKR (95 aa)) directs the protein to the chloroplast. The disordered stretch occupies residues 50-69 (MSTNNNNNNNQKNSSRRSAN). The segment covering 60–69 (QKNSSRRSAN) has biased composition (polar residues). (2E)-geranyl diphosphate-binding residues include arginine 334, aspartate 371, aspartate 375, arginine 515, and aspartate 518. Positions 371 and 375 each coordinate Mg(2+). The DDXXD motif motif lies at 371 to 375 (DDIYD). The Mg(2+) site is built by aspartate 518, threonine 522, and glutamate 526.

This sequence belongs to the terpene synthase family. Monomer. Mg(2+) serves as cofactor.

The protein localises to the plastid. The protein resides in the chloroplast. It carries out the reaction (2E)-geranyl diphosphate = (Z)-beta-ocimene + diphosphate. The protein operates within secondary metabolite biosynthesis; terpenoid biosynthesis. Its function is as follows. Involved in monoterpene (C10) olefins biosynthesis, constituants of cannabinoids and terpenoids-rich resins. Catalyzes mainly the conversion of (2E)-geranyl diphosphate to (Z)-beta-ocimene. This Cannabis sativa (Hemp) protein is (Z)-beta-ocimene synthase TPS13PK, chloroplastic.